We begin with the raw amino-acid sequence, 173 residues long: dCTP deaminase, dUMP-forming (173 aa).

DCTP-binding positions include 93 to 98 (RSSTGR), Asp111, 119 to 121 (TLE), Gln138, and Tyr151. Residue Glu121 is the Proton donor/acceptor of the active site.

The protein belongs to the dCTP deaminase family. In terms of assembly, homotrimer.

The catalysed reaction is dCTP + 2 H2O = dUMP + NH4(+) + diphosphate. The protein operates within pyrimidine metabolism; dUMP biosynthesis; dUMP from dCTP: step 1/1. In terms of biological role, bifunctional enzyme that catalyzes both the deamination of dCTP to dUTP and the hydrolysis of dUTP to dUMP without releasing the toxic dUTP intermediate. This is dCTP deaminase, dUMP-forming from Clostridium beijerinckii (strain ATCC 51743 / NCIMB 8052) (Clostridium acetobutylicum).